The following is a 258-amino-acid chain: Undecaprenyl-diphosphatase (258 aa).

The next 8 membrane-spanning stretches (helical) occupy residues 14-34 (AAGE…PWLL), 39-59 (QGLT…LIYF), 79-99 (GKIL…GVLF), 106-126 (VFRS…ILHL), 136-156 (VALN…ALMP), 176-196 (AESA…AAVL), 209-229 (AFIA…KFLM), and 237-257 (FNIF…TALM).

Belongs to the UppP family.

It is found in the cell membrane. The enzyme catalyses di-trans,octa-cis-undecaprenyl diphosphate + H2O = di-trans,octa-cis-undecaprenyl phosphate + phosphate + H(+). Its function is as follows. Catalyzes the dephosphorylation of undecaprenyl diphosphate (UPP). Confers resistance to bacitracin. In Elusimicrobium minutum (strain Pei191), this protein is Undecaprenyl-diphosphatase.